The chain runs to 570 residues: Spastin (570 aa).

The Cytoplasmic segment spans residues 1-35; it reads MNSGHKARLRGGRACGPVSDGSARGNRLLFYTRSL. Residues 36–52 constitute an intramembrane region (helical); that stretch reads SRVPEWLLRVLLLLLRW. Residues 53–570 lie on the Cytoplasmic side of the membrane; it reads LFQPIRRAMA…NREYGDTTGV (518 aa). One can recognise an MIT domain in the interval 83–158; sequence YHKQAFEFIS…SMAEDRLKLL (76 aa). A disordered region spans residues 186 to 269; the sequence is APASGAVSKK…SPQRKRDMKN (84 aa). Polar residues-rich tracts occupy residues 199–208, 216–242, and 251–261; these read LTITNQTSLR, TPNASGLNCTPSAAQSSRTGPQNNQKG, and VKASTTATASP. Residue 335-342 coordinates ATP; the sequence is GPPGNGKT.

Belongs to the AAA ATPase family. Spastin subfamily. In terms of assembly, homohexamer. The homohexamer is stabilized by ATP-binding. The homohexamer may adopt a ring conformation through which microtubules pass prior to being severed. Interacts with microtubules.

The protein resides in the membrane. It localises to the cytoplasm. It is found in the cytoskeleton. The protein localises to the microtubule organizing center. Its subcellular location is the centrosome. The protein resides in the perinuclear region. It localises to the nucleus. The enzyme catalyses n ATP + n H2O + a microtubule = n ADP + n phosphate + (n+1) alpha/beta tubulin heterodimers.. Functionally, ATP-dependent microtubule severing protein that specifically recognizes and cuts microtubules that are polyglutamylated. Preferentially recognizes and acts on microtubules decorated with short polyglutamate tails: severing activity increases as the number of glutamates per tubulin rises from one to eight, but decreases beyond this glutamylation threshold. Microtubule severing promotes reorganization of cellular microtubule arrays and the release of microtubules from the centrosome following nucleation. Required for membrane traffic from the endoplasmic reticulum (ER) to the Golgi and for completion of the abscission stage of cytokinesis. Also plays a role in axon growth and the formation of axonal branches. The chain is Spastin from Danio rerio (Zebrafish).